A 786-amino-acid polypeptide reads, in one-letter code: MITEDAFPVEPWQVRETKLNLNLLAQSESLFALSNGHIGLRGNLDEGEPFGLPGTYLNSFYEIRPLPYAEAGYGYPEAGQTVVDVTNGKIFRLLVGDEPFDVRYGELISHERILDLRAGTLTRRAHWRSPAGKQVKVTSTRLVSLAHRSVAAIEYVVEAIEEFVRVTVQSELVTNEDVPETSADPRVSAILDRPLQAVEHERTERGALLMHRTRASALMMAAGMEHEVEVPGRVEITTDARPDLARTTVICGLRPGQKLRIVKYLAYGWSSLRSRPALRDQAAGALHGARYSGWQGLLDAQRAYLDDFWDSADVEVEGDPECQQAVRFGLFHLLQASARAERRAIPSKGLTGTGYDGHAFWDTEGFVLPVLTYTAPHAVADALRWRASTLDLAKERAAELGLEGAAFPWRTIRGQESSAYWPAGTAAWHINADIAMAFERYRIVTGDGSLEEECGLAVLIETARLWLSLGHHDRHGVWHLDGVTGPDEYTAVVRDNVFTNLMAAHNLHTAADACLRHPEAAEAMGVTTEEMAAWRDAADAANIPYDEELGVHQQCEGFTTLAEWDFEANTTYPLLLHEAYVRLYPAQVIKQADLVLAMQWQSHAFTPEQKARNVDYYERRMVRDSSLSACTQAVMCAEVGHLELAHDYAYEAALIDLRDLHRNTRDGLHMASLAGAWTALVVGFGGLRDDEGILSIDPQLPDGISRLRFRLRWRGFRLIVDANHTDVTFILGDGPGTQLTMRHAGQDLTLHTDTPSTIAVRTRKPLLPPPPQPPGREPVHRRALAR.

Residue 361-362 (WD) coordinates substrate. Glu488 functions as the Proton donor in the catalytic mechanism. Position 590-591 (590-591 (KQ)) interacts with substrate. The segment at 762-786 (TRKPLLPPPPQPPGREPVHRRALAR) is disordered. Residues 766-776 (LLPPPPQPPGR) show a composition bias toward pro residues.

The protein belongs to the glycosyl hydrolase 65 family.

This is an uncharacterized protein from Mycobacterium tuberculosis (strain CDC 1551 / Oshkosh).